Consider the following 419-residue polypeptide: AT-rich binding protein (419 aa).

The C2H2-type 1 zinc finger occupies 29–52 (IVCHTCQEELQTQDAFWKHIQDEH). A disordered region spans residues 121–179 (LHEAQHQQQQQQQQHQQQQQQQQHQQQQQHQHHQHQQQQQHLHQQQQQQQQQQRDAAKE). 2 stretches are compositionally biased toward low complexity: residues 126-149 (HQQQQQQQQHQQQQQQQQHQQQQQ) and 156-173 (QQQQQHLHQQQQQQQQQQ). 2 consecutive C2H2-type zinc fingers follow at residues 352 to 376 (YVCDYGTCGIKFKYKSRMELHRVVH) and 382 to 405 (FNCDMCSASFKQSCNLSTHRKKKH).

The protein localises to the nucleus. Its function is as follows. May be a transcription factor for genes having (A+T) stretches in their promoter and/or enhancer regions. Binds to AT rich DNA. The sequence is that of AT-rich binding protein from Drosophila grimshawi (Hawaiian fruit fly).